The following is a 179-amino-acid chain: Ribulose bisphosphate carboxylase small subunit, chloroplastic 2 (179 aa).

The N-terminal 58 residues, 1-58, are a transit peptide targeting the chloroplast; it reads MASSATMLSSVATAACVAPAQASMVAPFVGLKSASAFPVTQKTVTGLSTLPSNGGRVQ.

Belongs to the RuBisCO small chain family. Heterohexadecamer of 8 large and 8 small subunits.

The protein resides in the plastid. The protein localises to the chloroplast. Its function is as follows. RuBisCO catalyzes two reactions: the carboxylation of D-ribulose 1,5-bisphosphate, the primary event in carbon dioxide fixation, as well as the oxidative fragmentation of the pentose substrate. Both reactions occur simultaneously and in competition at the same active site. Although the small subunit is not catalytic it is essential for maximal activity. The sequence is that of Ribulose bisphosphate carboxylase small subunit, chloroplastic 2 from Fritillaria agrestis (Stinkbells).